Consider the following 215-residue polypeptide: Cytochrome b6 (215 aa).

Residues 32–52 (IFYCLGGITLTCFLVQVATGF) traverse the membrane as a helical segment. Heme c is bound at residue Cys35. Heme b-binding residues include His86 and His100. 3 helical membrane passes run 90–110 (ASMM…TGGF), 116–136 (LTWV…VTGY), and 186–206 (LHTF…FLMI). Residues His187 and His202 each contribute to the heme b site.

The protein belongs to the cytochrome b family. PetB subfamily. As to quaternary structure, the 4 large subunits of the cytochrome b6-f complex are cytochrome b6, subunit IV (17 kDa polypeptide, PetD), cytochrome f and the Rieske protein, while the 4 small subunits are PetG, PetL, PetM and PetN. The complex functions as a dimer. The cofactor is heme b. Heme c is required as a cofactor.

The protein localises to the plastid. The protein resides in the chloroplast thylakoid membrane. Its function is as follows. Component of the cytochrome b6-f complex, which mediates electron transfer between photosystem II (PSII) and photosystem I (PSI), cyclic electron flow around PSI, and state transitions. This Pinus thunbergii (Japanese black pine) protein is Cytochrome b6.